The following is a 160-amino-acid chain: Protein MGF 300-2R (160 aa).

It belongs to the asfivirus MGF 300 family.

In terms of biological role, plays a role in virus cell tropism, and may be required for efficient virus replication in macrophages. The chain is Protein MGF 300-2R from Ornithodoros (relapsing fever ticks).